We begin with the raw amino-acid sequence, 92 residues long: Large ribosomal subunit protein uL23c (92 aa).

Belongs to the universal ribosomal protein uL23 family. Part of the 50S ribosomal subunit.

It localises to the plastid. Its subcellular location is the chloroplast. Binds to 23S rRNA. The chain is Large ribosomal subunit protein uL23c (rpl23) from Nephroselmis olivacea (Green alga).